We begin with the raw amino-acid sequence, 460 residues long: uncharacterized protein (460 aa).

Residues 1–33 constitute a signal peptide (tat-type signal); sequence MKESNSRREFLSQSGKMVTAAALFGTSVPLAHA.

This sequence belongs to the metallo-dependent hydrolases superfamily. Post-translationally, exported by the Tat system. The position of the signal peptide cleavage has not been experimentally proven. Can also be exported by the Sec system.

This is an uncharacterized protein from Escherichia coli (strain K12).